A 523-amino-acid chain; its full sequence is UDP-glucuronosyltransferase 3A2 (523 aa).

Residues 1 to 22 (MAAHRRWLLMSFLFLEVILLEA) form the signal peptide. Over 23 to 487 (AKILTISTLS…QPWHEQYMLD (465 aa)) the chain is Extracellular. Residue N52 is glycosylated (N-linked (GlcNAc...) asparagine). Residues 488–508 (VFLFLLGLMLGTLWLSVKVLV) form a helical membrane-spanning segment. Residues 509–523 (AVTRYLSIATKVKEA) lie on the Cytoplasmic side of the membrane.

It belongs to the UDP-glycosyltransferase family. As to expression, highly expressed in kidney, while it is expressed at low levels in liver. Not detected in other tissues examined.

It localises to the membrane. It catalyses the reaction glucuronate acceptor + UDP-alpha-D-glucuronate = acceptor beta-D-glucuronoside + UDP + H(+). Functionally, UDP-glucuronosyltransferases catalyze phase II biotransformation reactions in which lipophilic substrates are conjugated with glucuronic acid to increase water solubility and enhance excretion. They are of major importance in the conjugation and subsequent elimination of potentially toxic xenobiotics and endogenous compounds. The protein is UDP-glucuronosyltransferase 3A2 (Ugt3a2) of Mus musculus (Mouse).